Reading from the N-terminus, the 141-residue chain is Flagellar assembly factor FliW 1 (141 aa).

Belongs to the FliW family. As to quaternary structure, interacts with translational regulator CsrA and flagellin(s).

Its subcellular location is the cytoplasm. Acts as an anti-CsrA protein, binds CsrA and prevents it from repressing translation of its target genes, one of which is flagellin. Binds to flagellin and participates in the assembly of the flagellum. The chain is Flagellar assembly factor FliW 1 from Desulfotalea psychrophila (strain LSv54 / DSM 12343).